The following is a 320-amino-acid chain: Lipoyl synthase (320 aa).

Positions 67, 72, 78, 93, 97, 100, and 307 each coordinate [4Fe-4S] cluster. Positions 79–296 (FNHGTATFMI…RDKAQAMGFE (218 aa)) constitute a Radical SAM core domain.

This sequence belongs to the radical SAM superfamily. Lipoyl synthase family. [4Fe-4S] cluster serves as cofactor.

It localises to the cytoplasm. It carries out the reaction [[Fe-S] cluster scaffold protein carrying a second [4Fe-4S](2+) cluster] + N(6)-octanoyl-L-lysyl-[protein] + 2 oxidized [2Fe-2S]-[ferredoxin] + 2 S-adenosyl-L-methionine + 4 H(+) = [[Fe-S] cluster scaffold protein] + N(6)-[(R)-dihydrolipoyl]-L-lysyl-[protein] + 4 Fe(3+) + 2 hydrogen sulfide + 2 5'-deoxyadenosine + 2 L-methionine + 2 reduced [2Fe-2S]-[ferredoxin]. It participates in protein modification; protein lipoylation via endogenous pathway; protein N(6)-(lipoyl)lysine from octanoyl-[acyl-carrier-protein]: step 2/2. In terms of biological role, catalyzes the radical-mediated insertion of two sulfur atoms into the C-6 and C-8 positions of the octanoyl moiety bound to the lipoyl domains of lipoate-dependent enzymes, thereby converting the octanoylated domains into lipoylated derivatives. The sequence is that of Lipoyl synthase from Pasteurella multocida (strain Pm70).